We begin with the raw amino-acid sequence, 386 residues long: Glycerate dehydrogenase HPR, peroxisomal (386 aa).

Residues 175–176 (RI), 271–273 (CSR), and D297 each bind NAD(+). Residue R273 is part of the active site. E302 is an active-site residue. The active-site Proton donor is H320. Residue 320 to 323 (HIAS) participates in NAD(+) binding. The Microbody targeting signal signature appears at 384–386 (SKL).

This sequence belongs to the D-isomer specific 2-hydroxyacid dehydrogenase family. As to expression, present in leaves (at protein level). Mostly expressed in photosynthetic tissues such as leaves, stems, flowers, buds, and, to a lower extent, in siliques and roots.

It localises to the peroxisome. It carries out the reaction (R)-glycerate + NAD(+) = 3-hydroxypyruvate + NADH + H(+). It participates in photosynthesis; photorespiration; 3-phospho-D-glycerate from glycine: step 3/4. With respect to regulation, slightly inhibited by oxalate. Functionally, catalyzes the NADH-dependent reduction of hydroxypyruvate into glycerate in the photorespiratory core cycle. Mediates fatty acid beta-oxidation in germinating seeds when malate dehydrogenase is absent. This is Glycerate dehydrogenase HPR, peroxisomal (HPR) from Arabidopsis thaliana (Mouse-ear cress).